The primary structure comprises 118 residues: Large ribosomal subunit protein uL24 (118 aa).

The protein belongs to the universal ribosomal protein uL24 family. As to quaternary structure, part of the 50S ribosomal subunit.

One of two assembly initiator proteins, it binds directly to the 5'-end of the 23S rRNA, where it nucleates assembly of the 50S subunit. Functionally, one of the proteins that surrounds the polypeptide exit tunnel on the outside of the subunit. The sequence is that of Large ribosomal subunit protein uL24 from Prochlorococcus marinus (strain MIT 9515).